Here is a 1039-residue protein sequence, read N- to C-terminus: Error-prone DNA polymerase (1039 aa).

It belongs to the DNA polymerase type-C family. DnaE2 subfamily.

It is found in the cytoplasm. It catalyses the reaction DNA(n) + a 2'-deoxyribonucleoside 5'-triphosphate = DNA(n+1) + diphosphate. In terms of biological role, DNA polymerase involved in damage-induced mutagenesis and translesion synthesis (TLS). It is not the major replicative DNA polymerase. The sequence is that of Error-prone DNA polymerase from Corynebacterium diphtheriae (strain ATCC 700971 / NCTC 13129 / Biotype gravis).